A 73-amino-acid chain; its full sequence is uncharacterized protein (73 aa).

This is an uncharacterized protein from Thermoproteus tenax virus 1 (strain KRA1) (TTV1).